Reading from the N-terminus, the 505-residue chain is Protein amnionless (505 aa).

Positions 1 to 20 (MGLHWQWLIWALVGLHVALA) are cleaved as a signal peptide. Over 21-344 (TKWYGGGMDF…RPYNPNVSFS (324 aa)) the chain is Extracellular. The helical transmembrane segment at 345–365 (SIVLILFCMALVGLVSVVILA) threads the bilayer. At 366–505 (HFMPENPYLN…CEADTDEETI (140 aa)) the chain is on the cytoplasmic side. The tract at residues 451–482 (GALEEAAKESQEQDEILSVPKMETGDLDARSV) is disordered. Residues 473–482 (ETGDLDARSV) are compositionally biased toward basic and acidic residues.

In terms of tissue distribution, specifically expressed in nephrocytes.

It is found in the cell membrane. Required in the nephrocyte for normal uptake of proteins and elimination of toxins, and for maintenance of endocytic trafficking structures. May function together with Cubn. The protein is Protein amnionless of Drosophila melanogaster (Fruit fly).